The chain runs to 916 residues: Protein O-GlcNAcase (916 aa).

Residues Met1 to Gly46 are disordered. Residues Phe60–Met336 enclose the GH84 domain. The a protein site is built by Gly67, Lys98, and Asp174. The Proton donor role is filled by Asp175. Residues Tyr219, Trp278–Asn280, Asp285, and Asn313 each bind a protein. Phosphoserine is present on Ser364. The tract at residues Ala443–Met465 is disordered. A compositionally biased stretch (basic and acidic residues) spans Thr452–Asp461.

Belongs to the glycosyl hydrolase 84 family. In terms of assembly, monomer. Interacts with CLOCK. Post-translationally, proteolytically cleaved by caspase-3 during apoptosis. The fragments interact with each other; cleavage does not decrease enzyme activity.

It is found in the cytoplasm. Its subcellular location is the nucleus. It carries out the reaction 3-O-(N-acetyl-beta-D-glucosaminyl)-L-seryl-[protein] + H2O = N-acetyl-D-glucosamine + L-seryl-[protein]. The enzyme catalyses 3-O-(N-acetyl-beta-D-glucosaminyl)-L-threonyl-[protein] + H2O = L-threonyl-[protein] + N-acetyl-D-glucosamine. Its function is as follows. Cleaves GlcNAc but not GalNAc from O-glycosylated proteins. Deglycosylates a large and diverse number of proteins, such as CRYAB, ELK1, GSDMD, LMNB1 and TAB1. Can use p-nitrophenyl-beta-GlcNAc and 4-methylumbelliferone-GlcNAc as substrates but not p-nitrophenyl-beta-GalNAc or p-nitrophenyl-alpha-GlcNAc (in vitro). Does not bind acetyl-CoA and does not have histone acetyltransferase activity. The chain is Protein O-GlcNAcase from Mus musculus (Mouse).